Here is a 146-residue protein sequence, read N- to C-terminus: Probable glycine cleavage system H protein 3 (146 aa).

One can recognise a Lipoyl-binding domain in the interval 29-111 (VVSVGMTDLG…PYGSWIIKVS (83 aa)). N6-lipoyllysine is present on K71.

Belongs to the GcvH family. The glycine cleavage system is composed of four proteins: P, T, L and H. Requires (R)-lipoate as cofactor.

Its function is as follows. The glycine cleavage system catalyzes the degradation of glycine. The H protein shuttles the methylamine group of glycine from the P protein to the T protein. This Sulfolobus acidocaldarius (strain ATCC 33909 / DSM 639 / JCM 8929 / NBRC 15157 / NCIMB 11770) protein is Probable glycine cleavage system H protein 3.